The sequence spans 418 residues: Gamma-glutamyl phosphate reductase (418 aa).

It belongs to the gamma-glutamyl phosphate reductase family.

It localises to the cytoplasm. The catalysed reaction is L-glutamate 5-semialdehyde + phosphate + NADP(+) = L-glutamyl 5-phosphate + NADPH + H(+). It functions in the pathway amino-acid biosynthesis; L-proline biosynthesis; L-glutamate 5-semialdehyde from L-glutamate: step 2/2. Catalyzes the NADPH-dependent reduction of L-glutamate 5-phosphate into L-glutamate 5-semialdehyde and phosphate. The product spontaneously undergoes cyclization to form 1-pyrroline-5-carboxylate. This is Gamma-glutamyl phosphate reductase from Moorella thermoacetica (strain ATCC 39073 / JCM 9320).